Here is a 176-residue protein sequence, read N- to C-terminus: Alkyl hydroperoxide reductase AhpD (176 aa).

Cys131 serves as the catalytic Proton donor. Cys131 and Cys134 are joined by a disulfide. Cys134 functions as the Cysteine sulfenic acid (-SOH) intermediate in the catalytic mechanism.

Belongs to the AhpD family.

The catalysed reaction is N(6)-[(R)-dihydrolipoyl]-L-lysyl-[lipoyl-carrier protein] + a hydroperoxide = N(6)-[(R)-lipoyl]-L-lysyl-[lipoyl-carrier protein] + an alcohol + H2O. In terms of biological role, antioxidant protein with alkyl hydroperoxidase activity. Required for the reduction of the AhpC active site cysteine residues and for the regeneration of the AhpC enzyme activity. This is Alkyl hydroperoxide reductase AhpD from Methylobacterium sp. (strain 4-46).